Consider the following 192-residue polypeptide: uncharacterized protein (192 aa).

The Nudix hydrolase domain maps to 29–160 (HRQAAVLIPI…PLDIYRRGDS (132 aa)). The Nudix box motif lies at 67 to 89 (GAVDDTDASVIAAALREAEEEVA). Mg(2+) is bound by residues Glu-83 and Glu-87.

This sequence belongs to the Nudix hydrolase family. PCD1 subfamily. The cofactor is Mn(2+). It depends on Mg(2+) as a cofactor.

Functionally, probably mediates the hydrolysis of some nucleoside diphosphate derivatives. This is an uncharacterized protein from Escherichia coli (strain SE11).